We begin with the raw amino-acid sequence, 263 residues long: Stress-response A/B barrel domain-containing protein UP3 (263 aa).

Stress-response A/B barrel domains are found at residues 49–142 (IEHI…AVDW) and 158–252 (VAKL…VVEF). Residues 261–263 (SSL) carry the Peroxisomal targeting signal motif.

As to quaternary structure, homodimer.

Its subcellular location is the peroxisome. Functionally, involved in stress response. This Arabidopsis thaliana (Mouse-ear cress) protein is Stress-response A/B barrel domain-containing protein UP3.